A 188-amino-acid polypeptide reads, in one-letter code: Small ribosomal subunit protein bS18c (188 aa).

Residues 1-19 (MNNQSFNNFSQVNSNSSFF) show a composition bias toward low complexity. The interval 1 to 79 (MNNQSFNNFS…TSNKRKVLSV (79 aa)) is disordered. The span at 25 to 71 (NLQNTNLEMTNGTNPPSSFSKQTPQKRQSFGTNTNFSKGNSSRGSTS) shows a compositional bias: polar residues.

It belongs to the bacterial ribosomal protein bS18 family. Part of the 30S ribosomal subunit.

It localises to the plastid. Its subcellular location is the chloroplast. This Tetradesmus obliquus (Green alga) protein is Small ribosomal subunit protein bS18c.